The primary structure comprises 365 residues: tRNA/tmRNA (uracil-C(5))-methyltransferase (365 aa).

Glutamine 189, tyrosine 217, asparagine 222, glutamate 238, and aspartate 298 together coordinate S-adenosyl-L-methionine. The active-site Nucleophile is cysteine 323. The active-site Proton acceptor is the glutamate 357.

This sequence belongs to the class I-like SAM-binding methyltransferase superfamily. RNA M5U methyltransferase family. TrmA subfamily.

It carries out the reaction uridine(54) in tRNA + S-adenosyl-L-methionine = 5-methyluridine(54) in tRNA + S-adenosyl-L-homocysteine + H(+). It catalyses the reaction uridine(341) in tmRNA + S-adenosyl-L-methionine = 5-methyluridine(341) in tmRNA + S-adenosyl-L-homocysteine + H(+). Dual-specificity methyltransferase that catalyzes the formation of 5-methyluridine at position 54 (m5U54) in all tRNAs, and that of position 341 (m5U341) in tmRNA (transfer-mRNA). This is tRNA/tmRNA (uracil-C(5))-methyltransferase from Saccharophagus degradans (strain 2-40 / ATCC 43961 / DSM 17024).